Here is a 655-residue protein sequence, read N- to C-terminus: Chaperone protein DnaK 3 (655 aa).

A Phosphothreonine; by autocatalysis modification is found at Thr-197.

The protein belongs to the heat shock protein 70 family.

Functionally, acts as a chaperone. This Synechococcus sp. (strain ATCC 27144 / PCC 6301 / SAUG 1402/1) (Anacystis nidulans) protein is Chaperone protein DnaK 3.